The chain runs to 242 residues: Probable transcriptional regulatory protein BamMC406_2210 (242 aa).

Belongs to the TACO1 family.

It is found in the cytoplasm. This Burkholderia ambifaria (strain MC40-6) protein is Probable transcriptional regulatory protein BamMC406_2210.